Here is a 112-residue protein sequence, read N- to C-terminus: Ribosomal processing cysteine protease Prp (112 aa).

The active-site Proton donor is the His-22. Cys-34 functions as the Nucleophile in the catalytic mechanism.

It belongs to the Prp family. As to quaternary structure, homodimer.

An essential cysteine protease that cleaves the N-terminus from ribosomal protein bL27. This is Ribosomal processing cysteine protease Prp from Bacillus subtilis (strain 168).